The sequence spans 441 residues: Enolase (441 aa).

Q163 provides a ligand contact to (2R)-2-phosphoglycerate. The Proton donor role is filled by E205. Residues D242, E288, and D315 each contribute to the Mg(2+) site. (2R)-2-phosphoglycerate-binding residues include K340, R369, S370, and K391. Residue K340 is the Proton acceptor of the active site.

The protein belongs to the enolase family. Requires Mg(2+) as cofactor.

Its subcellular location is the cytoplasm. The protein resides in the secreted. It localises to the cell surface. The enzyme catalyses (2R)-2-phosphoglycerate = phosphoenolpyruvate + H2O. The protein operates within carbohydrate degradation; glycolysis; pyruvate from D-glyceraldehyde 3-phosphate: step 4/5. In terms of biological role, catalyzes the reversible conversion of 2-phosphoglycerate (2-PG) into phosphoenolpyruvate (PEP). It is essential for the degradation of carbohydrates via glycolysis. This Ligilactobacillus salivarius (strain UCC118) (Lactobacillus salivarius) protein is Enolase.